The sequence spans 247 residues: DNA polymerase sliding clamp (247 aa).

The protein belongs to the PCNA family. As to quaternary structure, homotrimer. The subunits circularize to form a toroid; DNA passes through its center. Replication factor C (RFC) is required to load the toroid on the DNA.

Its function is as follows. Sliding clamp subunit that acts as a moving platform for DNA processing. Responsible for tethering the catalytic subunit of DNA polymerase and other proteins to DNA during high-speed replication. This chain is DNA polymerase sliding clamp, found in Methanoculleus marisnigri (strain ATCC 35101 / DSM 1498 / JR1).